We begin with the raw amino-acid sequence, 1269 residues long: Rho GTPase-activating protein 29 (1269 aa).

A phosphoserine mark is found at Ser171, Ser176, Ser179, and Ser190. The F-BAR domain maps to 192 to 462 (IELDSMLLKN…SAKLYDPGQE (271 aa)). A coiled-coil region spans residues 296–418 (RKNEMEKQRK…EILTQLRKLV (123 aa)). Disordered stretches follow at residues 472 to 523 (SAEE…NSAD) and 540 to 599 (DSES…NSLG). Phosphoserine is present on residues Ser499, Ser519, and Ser552. Residues 540–559 (DSESTGGSSESRSLDSESIS) are compositionally biased toward low complexity. The Phorbol-ester/DAG-type zinc-finger motif lies at 612–657 (THKFRKLRSPTKCRDCEGIVVFHGVECEECLLVCHRKCLENLVIIC). The region spanning 671–886 (AEFTQVAKKE…FLITYSQKIF (216 aa)) is the Rho-GAP domain. The disordered stretch occupies residues 909–936 (PGYLPKSLLSPEERDPERSMKSLFFSSK). Residue Ser918 is modified to Phosphoserine. Positions 919–928 (PEERDPERSM) are enriched in basic and acidic residues. Residues Ser954 and Ser1026 each carry the phosphoserine modification. Positions 1120–1269 (RSSGDHPVSI…DLEDEIPQFV (150 aa)) are disordered. Residues 1128 to 1145 (SITQPSKPYTEPVRSTRQ) are compositionally biased toward polar residues. Ser1152 and Ser1154 each carry phosphoserine. The segment covering 1162 to 1172 (TPRTLQPQHWT) has biased composition (polar residues). The span at 1229–1241 (SRPEEKAEERDQP) shows a compositional bias: basic and acidic residues. Acidic residues predominate over residues 1259–1269 (EDLEDEIPQFV). Positions 1266–1269 (PQFV) are interaction with PTPN13/PTPL1.

As to quaternary structure, interacts with PTPN13/PTPL1. Interacts with RAP2A via its coiled coil domain. Interacts with RASIP1.

Functionally, GTPase activator for the Rho-type GTPases by converting them to an inactive GDP-bound state. Has strong activity toward RHOA, and weaker activity toward RAC1 and CDC42. May act as a specific effector of RAP2A to regulate Rho. In concert with RASIP1, suppresses RhoA signaling and dampens ROCK and MYH9 activities in endothelial cells and plays an essential role in blood vessel tubulogenesis. The protein is Rho GTPase-activating protein 29 (ARHGAP29) of Bos taurus (Bovine).